Consider the following 306-residue polypeptide: Protein YIPF1 (306 aa).

Residues 1 to 119 (MAAVDDLQFE…VRLYIRSNPD (119 aa)) lie on the Cytoplasmic side of the membrane. A disordered region spans residues 33-59 (PSVSFKHQPRPPGSLGREEDEELLGTN). Acidic residues predominate over residues 50-59 (EEDEELLGTN). Residues 120–140 (LYGPFWICATLVFAIAISGNL) form a helical membrane-spanning segment. The Lumenal portion of the chain corresponds to 141-162 (SNFLIHLGEKTYHYVPEFQKVS). A helical membrane pass occupies residues 163–183 (IAATVIYAYAWLVPLALWGFL). The Cytoplasmic portion of the chain corresponds to 184–200 (LWRNSKVMNIVSYSFLE). Residues 201-221 (IVCVYGYSLFIYIPTAVLWII) traverse the membrane as a helical segment. Residues 222–227 (PQRVIR) lie on the Lumenal side of the membrane. The chain crosses the membrane as a helical span at residues 228 to 248 (WVLVTIALGISGSVLAMTFWP). Topologically, residues 249–256 (AVREDNRR) are cytoplasmic. The chain crosses the membrane as a helical span at residues 257–277 (VALATIVTIMLLHVLLSVGCL). Topologically, residues 278 to 306 (AYFFDAPEMDHLPAAITTPNQTVAAAKSS) are lumenal. N-linked (GlcNAc...) asparagine glycosylation is present at Asn297.

Belongs to the YIP1 family. As to quaternary structure, interacts with YIPF6; this interaction may stabilize YIPF1. May also form a ternary complex with YIPF2 and YIPF6.

Its subcellular location is the golgi apparatus. It is found in the cis-Golgi network membrane. The protein resides in the trans-Golgi network membrane. The protein localises to the late endosome membrane. The protein is Protein YIPF1 (Yipf1) of Rattus norvegicus (Rat).